We begin with the raw amino-acid sequence, 364 residues long: Probable dual-specificity RNA methyltransferase RlmN (364 aa).

Catalysis depends on E107, which acts as the Proton acceptor. Residues 113-346 form the Radical SAM core domain; it reads HDYGNSVCVT…ATIRREQGSD (234 aa). C120 and C351 are joined by a disulfide. [4Fe-4S] cluster is bound by residues C127, C131, and C134. Residues 177–178, S209, 232–234, and N308 each bind S-adenosyl-L-methionine; these read GE and SLH. Catalysis depends on C351, which acts as the S-methylcysteine intermediate.

The protein belongs to the radical SAM superfamily. RlmN family. [4Fe-4S] cluster serves as cofactor.

It is found in the cytoplasm. It carries out the reaction adenosine(2503) in 23S rRNA + 2 reduced [2Fe-2S]-[ferredoxin] + 2 S-adenosyl-L-methionine = 2-methyladenosine(2503) in 23S rRNA + 5'-deoxyadenosine + L-methionine + 2 oxidized [2Fe-2S]-[ferredoxin] + S-adenosyl-L-homocysteine. The enzyme catalyses adenosine(37) in tRNA + 2 reduced [2Fe-2S]-[ferredoxin] + 2 S-adenosyl-L-methionine = 2-methyladenosine(37) in tRNA + 5'-deoxyadenosine + L-methionine + 2 oxidized [2Fe-2S]-[ferredoxin] + S-adenosyl-L-homocysteine. Functionally, specifically methylates position 2 of adenine 2503 in 23S rRNA and position 2 of adenine 37 in tRNAs. Confers resistance to some classes of antibiotics. The chain is Probable dual-specificity RNA methyltransferase RlmN from Staphylococcus haemolyticus (strain JCSC1435).